Consider the following 396-residue polypeptide: Putative N(4)-(beta-N-acetylglucosaminyl)-L-asparaginase GG24090 (396 aa).

The signal sequence occupies residues 1–23 (MKRHLGTCLWVLCLASTAFSSLA). Intrachain disulfides connect C100–C105 and C199–C215. T246 acts as the Nucleophile in catalysis. Substrate contacts are provided by residues 274–277 (RVGD) and 297–300 (TGDG). A disulfide bridge connects residues C357 and C384.

This sequence belongs to the Ntn-hydrolase family. In terms of assembly, heterotetramer of two alpha and two beta chains arranged as a dimer of alpha/beta heterodimers. Cleaved into an alpha and beta chain by autocatalysis; this activates the enzyme. The N-terminal residue of the beta subunit is responsible for the nucleophile hydrolase activity.

It carries out the reaction N(4)-(beta-N-acetyl-D-glucosaminyl)-L-asparagine + H2O = N-acetyl-beta-D-glucosaminylamine + L-aspartate + H(+). Its function is as follows. Cleaves the GlcNAc-Asn bond which joins oligosaccharides to the peptide of asparagine-linked glycoproteins. This chain is Putative N(4)-(beta-N-acetylglucosaminyl)-L-asparaginase GG24090, found in Drosophila erecta (Fruit fly).